Consider the following 285-residue polypeptide: NAD kinase (285 aa).

Aspartate 76 acts as the Proton acceptor in catalysis. Residues 76–77 (DG), 151–152 (NE), histidine 162, arginine 179, aspartate 181, 192–197 (TAYSLS), and glutamine 252 each bind NAD(+).

Belongs to the NAD kinase family. It depends on a divalent metal cation as a cofactor.

It is found in the cytoplasm. The enzyme catalyses NAD(+) + ATP = ADP + NADP(+) + H(+). Involved in the regulation of the intracellular balance of NAD and NADP, and is a key enzyme in the biosynthesis of NADP. Catalyzes specifically the phosphorylation on 2'-hydroxyl of the adenosine moiety of NAD to yield NADP. The sequence is that of NAD kinase from Haemophilus influenzae (strain ATCC 51907 / DSM 11121 / KW20 / Rd).